Consider the following 240-residue polypeptide: Ribosomal RNA small subunit methyltransferase J (240 aa).

Residues 93–94 and Asp-162 each bind S-adenosyl-L-methionine; that span reads RD.

Belongs to the methyltransferase superfamily. RsmJ family.

The protein localises to the cytoplasm. The enzyme catalyses guanosine(1516) in 16S rRNA + S-adenosyl-L-methionine = N(2)-methylguanosine(1516) in 16S rRNA + S-adenosyl-L-homocysteine + H(+). Its function is as follows. Specifically methylates the guanosine in position 1516 of 16S rRNA. This Francisella philomiragia subsp. philomiragia (strain ATCC 25017 / CCUG 19701 / FSC 153 / O#319-036) protein is Ribosomal RNA small subunit methyltransferase J.